The chain runs to 726 residues: MDNPTDSAGKCPVAHGNTPRSRSNRDWWPDQLNVQILHQNSGRADPLGQAFDYAEEFKKLDLDGLKKDLHALMTDSQDWWPADFGHYGGLFIRMAWHSAGTYRITDGRGGAGAGQQRFAPLNSWPDNVNLDKARRLLWPIKQKYGNRISWADLLILTGNVALESMGFKTFGFAGGRADVWEPEELYWGPEGTWLGDERYSGERGLAEPLGAVQMGLIYVNPEGPNGTPDPLASARDIRETFARMAMNDEETVALIAGGHTFGKTHGAGDPSFVGVDPEGGELEAQGLGWTSKFNTGVGRDAIGSGLEVTWTQTPTQWSNYFFENLFAFEWELTKSPGGAHQWQAKNADASIPDAYDASKRHLPTMLTSDLALRFDPVYEKISRRFLENPDQFADAFARAWFKLTHRDMGPKVRYLGPEVPAEDLIWQDVIPAVDHPLVDDKDIADLKEKVLATGLTVQELVSTAWASASTFRGSDKRGGANGARIRLAPQKDWEVNQPAQLAKVLGVLEGIQKNFNAAQTGAKKISLADLIVLGGAAGVEKAAAAGGHAVSVPFTPGRMDASEAQTDAHSFAALKPRADGFRNYIGGRQFMKPEEALVDRAQLLTLTGPEMTVLVGGLRVLKAGAPEHGVFTSRPETLTNDFFVNLLDMGTQWSPAAGRDGVYEGRDRKTNDVKWTGTRVDLIFGSHSQLRAFAEVYGQADTKEKFVRDFVAAWTKVMNADRFDLV.

The N-terminal stretch at 1 to 16 is a signal peptide; the sequence is MDNPTDSAGKCPVAHG. The disordered stretch occupies residues 1 to 26; that stretch reads MDNPTDSAGKCPVAHGNTPRSRSNRD. A cross-link (tryptophyl-tyrosyl-methioninium (Trp-Tyr) (with M-244)) is located at residues 96 to 218; sequence WHSAGTYRIT…LGAVQMGLIY (123 aa). His-97 (proton acceptor) is an active-site residue. Positions 218–244 form a cross-link, tryptophyl-tyrosyl-methioninium (Tyr-Met) (with W-96); the sequence is YVNPEGPNGTPDPLASARDIRETFARM. Residue His-259 participates in heme b binding.

Belongs to the peroxidase family. Peroxidase/catalase subfamily. As to quaternary structure, homodimer or homotetramer. The cofactor is heme b. Formation of the three residue Trp-Tyr-Met cross-link is important for the catalase, but not the peroxidase activity of the enzyme.

The catalysed reaction is H2O2 + AH2 = A + 2 H2O. The enzyme catalyses 2 H2O2 = O2 + 2 H2O. In terms of biological role, bifunctional enzyme with both catalase and broad-spectrum peroxidase activity. The sequence is that of Catalase-peroxidase from Rhizobium johnstonii (strain DSM 114642 / LMG 32736 / 3841) (Rhizobium leguminosarum bv. viciae).